Reading from the N-terminus, the 273-residue chain is 4-hydroxy-tetrahydrodipicolinate reductase (273 aa).

12–17 is an NAD(+) binding site; that stretch reads GAAGRM. Arg-39 lines the NADP(+) pocket. Residues 102–104 and 126–129 each bind NAD(+); these read GTT and AANF. His-159 (proton donor/acceptor) is an active-site residue. (S)-2,3,4,5-tetrahydrodipicolinate is bound at residue His-160. Catalysis depends on Lys-163, which acts as the Proton donor. Position 169–170 (169–170) interacts with (S)-2,3,4,5-tetrahydrodipicolinate; that stretch reads GT.

This sequence belongs to the DapB family. In terms of assembly, homotetramer.

The protein localises to the cytoplasm. It carries out the reaction (S)-2,3,4,5-tetrahydrodipicolinate + NAD(+) + H2O = (2S,4S)-4-hydroxy-2,3,4,5-tetrahydrodipicolinate + NADH + H(+). The enzyme catalyses (S)-2,3,4,5-tetrahydrodipicolinate + NADP(+) + H2O = (2S,4S)-4-hydroxy-2,3,4,5-tetrahydrodipicolinate + NADPH + H(+). Its pathway is amino-acid biosynthesis; L-lysine biosynthesis via DAP pathway; (S)-tetrahydrodipicolinate from L-aspartate: step 4/4. Its function is as follows. Catalyzes the conversion of 4-hydroxy-tetrahydrodipicolinate (HTPA) to tetrahydrodipicolinate. The sequence is that of 4-hydroxy-tetrahydrodipicolinate reductase from Erwinia tasmaniensis (strain DSM 17950 / CFBP 7177 / CIP 109463 / NCPPB 4357 / Et1/99).